Here is a 241-residue protein sequence, read N- to C-terminus: Venom nerve growth factor 2 (241 aa).

The N-terminal stretch at 1 to 18 (MSMLCYTLITAFLIGIWA) is a signal peptide. A propeptide spanning residues 19 to 125 (APKSEDNVPL…SLNRNIRAKR (107 aa)) is cleaved from the precursor. Residues 47 to 67 (GLKTSRNTDQRHPAPQKAEDQ) are disordered. 3 disulfide bridges follow: Cys139–Cys203, Cys181–Cys231, and Cys191–Cys233.

It belongs to the NGF-beta family. In terms of assembly, homodimer; non-covalently linked. In terms of tissue distribution, expressed by the venom gland.

It localises to the secreted. In terms of biological role, nerve growth factor is important for the development and maintenance of the sympathetic and sensory nervous systems. It stimulates division and differentiation of sympathetic and embryonic sensory neurons as well as basal forebrain cholinergic neurons in the brain. Its relevance in the snake venom is not clear. However, it has been shown to inhibit metalloproteinase-dependent proteolysis of platelet glycoprotein Ib alpha, suggesting a metalloproteinase inhibition to prevent metalloprotease autodigestion and/or protection against prey proteases. Binds a lipid between the two protein chains in the homodimer. The lipid-bound form promotes histamine relase from mouse mast cells, contrary to the lipid-free form. The polypeptide is Venom nerve growth factor 2 (Naja sputatrix (Malayan spitting cobra)).